The chain runs to 461 residues: Diacylglycerol O-acyltransferase 1 (461 aa).

A disordered region spans residues 1–38; that stretch reads MQDSMDDSLREAEGRQDDSEVSSGTTLGSSTPEDSGVT. The Cytoplasmic segment spans residues 1 to 112; that stretch reads MQDSMDDSLR…TLVVAWHTSS (112 aa). Residues 7-18 show a composition bias toward basic and acidic residues; it reads DSLREAEGRQDD. The segment covering 21 to 33 has biased composition (polar residues); it reads VSSGTTLGSSTPE. A helical membrane pass occupies residues 113 to 133; sequence FIYMTVLVLFLAANPLMWWFM. Topologically, residues 134 to 230 are lumenal; it reads VPYMVYYVWN…ARPQVATGPR (97 aa). A helical membrane pass occupies residues 231 to 251; the sequence is YIFGYHPHGVGALGAFGAIAT. Residues 252-258 are Cytoplasmic-facing; that stretch reads EGCNWSK. Residues 259 to 279 form a helical membrane-spanning segment; sequence VFAGIPACLCTLVNQFQIPIY. Residues 280-332 are Lumenal-facing; it reads RDYLLGLGCTSVARKNVLKVLEQNYSVCIVVGGAQEALLSRVGSTELVLNKRK. The helical transmembrane segment at 333–353 threads the bilayer; the sequence is GFIKLALETGNVNLVPIYAFG. Residues 354-461 lie on the Cytoplasmic side of the membrane; sequence ETDCFNVLDT…YAGKELKIVE (108 aa).

This sequence belongs to the diacylglycerol acyltransferase family.

The protein localises to the lipid droplet. Its subcellular location is the endoplasmic reticulum membrane. The enzyme catalyses an acyl-CoA + a 1,2-diacyl-sn-glycerol = a triacyl-sn-glycerol + CoA. The catalysed reaction is a 2-acylglycerol + an acyl-CoA = a 1,2-diacyl-sn-glycerol + CoA. It functions in the pathway glycerolipid metabolism; triacylglycerol biosynthesis. Catalyzes the terminal and only committed step in triacylglycerol (TAG) synthesis by using diacylglycerol (DAG) and fatty acyl-CoA as substrates. Required for storage lipid synthesis. Major DAG esterifying enzyme in stationary phase when TAG production is particularly active. Involved in lipid particle synthesis from the endoplasmic reticulum, promoting localized TAG production at discrete ER subdomains. The protein is Diacylglycerol O-acyltransferase 1 (DGA1) of Eremothecium gossypii (strain ATCC 10895 / CBS 109.51 / FGSC 9923 / NRRL Y-1056) (Yeast).